The primary structure comprises 118 residues: Acidic phospholipase A2 (118 aa).

The Ca(2+) site is built by tyrosine 25, glycine 27, and glycine 29. Histidine 45 is a catalytic residue. Aspartate 46 contacts Ca(2+). Residue aspartate 86 is part of the active site.

It belongs to the phospholipase A2 family. Group II subfamily. D49 sub-subfamily. The cofactor is Ca(2+). In terms of processing, six disulfide bonds are present. In terms of tissue distribution, expressed by the venom gland.

It localises to the secreted. It carries out the reaction a 1,2-diacyl-sn-glycero-3-phosphocholine + H2O = a 1-acyl-sn-glycero-3-phosphocholine + a fatty acid + H(+). In terms of biological role, PLA2 catalyzes the calcium-dependent hydrolysis of the 2-acyl groups in 3-sn-phosphoglycerides. This is Acidic phospholipase A2 from Bitis gabonica (Gaboon adder).